Reading from the N-terminus, the 324-residue chain is Dolichyl-phosphate beta-glucosyltransferase (324 aa).

Over 1-7 (MATLLLQ) the chain is Lumenal. The helical transmembrane segment at 8–28 (LLGLGVALAAAALILVSIVAF) threads the bilayer. At 29-324 (ITATKMPPCY…WRLKQTRKAS (296 aa)) the chain is on the cytoplasmic side.

The protein belongs to the glycosyltransferase 2 family.

The protein localises to the endoplasmic reticulum membrane. It carries out the reaction a di-trans,poly-cis-dolichyl phosphate + UDP-alpha-D-glucose = a di-trans,poly-cis-dolichyl beta-D-glucosyl phosphate + UDP. It participates in protein modification; protein glycosylation. Its function is as follows. Dolichyl-phosphate beta-glucosyltransferase that operates in the biosynthetic pathway of dolichol-linked oligosaccharides, the glycan precursors employed in protein asparagine (N)-glycosylation. The assembly of dolichol-linked oligosaccharides begins on the cytosolic side of the endoplasmic reticulum membrane and finishes in its lumen. The sequential addition of sugars to dolichol pyrophosphate produces dolichol-linked oligosaccharides containing fourteen sugars, including two GlcNAcs, nine mannoses and three glucoses. Once assembled, the oligosaccharide is transferred from the lipid to nascent proteins by oligosaccharyltransferases. Dolichyl-phosphate beta-glucosyltransferase produces dolichyl beta-D-glucosyl phosphate/Dol-P-Glc, the glucose donor substrate used sequentially by ALG6, ALG8 and ALG10 to add glucose residues on top of the Man(9)GlcNAc(2)-PP-Dol structure. These are the three last steps in the biosynthetic pathway of dolichol-linked oligosaccharides to produce Glc(3)Man(9)GlcNAc(2)-PP-Dol. The enzyme is most probably active on the cytoplasmic side of the endoplasmic reticulum while its product Dol-P-Glc is the substrate for ALG6, ALG8 and ALG11 in the lumen of the endoplasmic reticulum. The protein is Dolichyl-phosphate beta-glucosyltransferase of Mus musculus (Mouse).